The primary structure comprises 132 residues: L-ectoine synthase (132 aa).

This sequence belongs to the ectoine synthase family.

The enzyme catalyses (2S)-4-acetamido-2-aminobutanoate = L-ectoine + H2O. It functions in the pathway amine and polyamine biosynthesis; ectoine biosynthesis; L-ectoine from L-aspartate 4-semialdehyde: step 3/3. Functionally, catalyzes the circularization of gamma-N-acetyl-alpha,gamma-diaminobutyric acid (ADABA) to ectoine (1,4,5,6-tetrahydro-2-methyl-4-pyrimidine carboxylic acid), which is an excellent osmoprotectant. This is L-ectoine synthase from Bordetella avium (strain 197N).